The following is a 335-amino-acid chain: Cytoskeleton protein RodZ (335 aa).

The Cytoplasmic segment spans residues 1 to 111 (MNTEATHDQN…LGKRRKKRDG (111 aa)). Residues 19–71 (LRNAREQLGLSQQAVAERLCLKVSTVRDIEEDKAPADLASTFLRGYIRSYARL) enclose the HTH cro/C1-type domain. The H-T-H motif DNA-binding region spans 30–49 (QQAVAERLCLKVSTVRDIEE). A helical; Signal-anchor for type II membrane protein membrane pass occupies residues 112-132 (WLMTFTWLVLFVVIGLSGAWW). Residues 133 to 335 (WQDHKAQQEE…TLNAEQSPAQ (203 aa)) lie on the Periplasmic side of the membrane. Residues 148 to 164 (DQSSAELNNNQSQSVPL) are compositionally biased toward polar residues. The disordered stretch occupies residues 148–244 (DQSSAELNNN…PLPTDQAGVT (97 aa)). Composition is skewed to low complexity over residues 165 to 205 (DTST…DPQQ) and 217 to 239 (DTAA…LPTD).

It belongs to the RodZ family.

It is found in the cell inner membrane. In terms of biological role, cytoskeletal protein that is involved in cell-shape control through regulation of the length of the long axis. This chain is Cytoskeleton protein RodZ, found in Escherichia coli O6:H1 (strain CFT073 / ATCC 700928 / UPEC).